The sequence spans 348 residues: Phospho-N-acetylmuramoyl-pentapeptide-transferase (348 aa).

10 helical membrane-spanning segments follow: residues 11-31 (SWML…IFLG), 68-88 (AGGI…LPLG), 92-112 (TWLF…DDII), 128-148 (FVIQ…IYKG), 165-185 (VGHS…TIVG), 196-216 (LDGL…VVAL), 222-242 (PLAQ…FAFL), 251-271 (VFMG…CAVM), 276-296 (LLLI…ILQV), and 326-346 (VVAR…IAAL).

Belongs to the glycosyltransferase 4 family. MraY subfamily. Requires Mg(2+) as cofactor.

It localises to the cell inner membrane. The enzyme catalyses UDP-N-acetyl-alpha-D-muramoyl-L-alanyl-gamma-D-glutamyl-meso-2,6-diaminopimeloyl-D-alanyl-D-alanine + di-trans,octa-cis-undecaprenyl phosphate = di-trans,octa-cis-undecaprenyl diphospho-N-acetyl-alpha-D-muramoyl-L-alanyl-D-glutamyl-meso-2,6-diaminopimeloyl-D-alanyl-D-alanine + UMP. The protein operates within cell wall biogenesis; peptidoglycan biosynthesis. Catalyzes the initial step of the lipid cycle reactions in the biosynthesis of the cell wall peptidoglycan: transfers peptidoglycan precursor phospho-MurNAc-pentapeptide from UDP-MurNAc-pentapeptide onto the lipid carrier undecaprenyl phosphate, yielding undecaprenyl-pyrophosphoryl-MurNAc-pentapeptide, known as lipid I. This is Phospho-N-acetylmuramoyl-pentapeptide-transferase from Chlamydia caviae (strain ATCC VR-813 / DSM 19441 / 03DC25 / GPIC) (Chlamydophila caviae).